The sequence spans 889 residues: Potassium/sodium hyperpolarization-activated cyclic nucleotide-gated channel 2 (889 aa).

Over residues 1 to 10 the composition is skewed to gly residues; that stretch reads MDARGGGGRP. The interval 1-159 is disordered; the sequence is MDARGGGGRP…GPAGEPRGSQ (159 aa). Residues 1–215 lie on the Cytoplasmic side of the membrane; that stretch reads MDARGGGGRP…PYSDFRFYWD (215 aa). The span at 17 to 55 shows a compositional bias: pro residues; it reads TPAPGPPPPPPPAPPQQQPPPPPPPAPPPGPGPAPPQHP. Residues 129-155 are compositionally biased toward low complexity; it reads GAASGPAPGPGPAEEAGSEEAGPAGEP. Ser146 and Ser161 each carry phosphoserine. Residues 158 to 209 are involved in subunit assembly; sequence SQASFMQRQFGALLQPGVNKFSLRMFGSQKAVEREQERVKSAGAWIIHPYSD. The helical transmembrane segment at 216–236 threads the bilayer; it reads FTMLLFMVGNLIIIPVGITFF. Residues 237-240 lie on the Extracellular side of the membrane; it reads KDET. A helical transmembrane segment spans residues 241 to 261; that stretch reads TAPWIVFNVVSDTFFLMDLVL. Residues 262-288 are Cytoplasmic-facing; sequence NFRTGIVIEDNTEIILDPEKIKKKYLR. Residues 289–309 traverse the membrane as a helical segment; it reads TWFVVDFVSSIPVDYIFLIVE. The Extracellular portion of the chain corresponds to 310-317; it reads KGIDSEVY. Residues 318-338 traverse the membrane as a helical; Voltage-sensor segment; sequence KTARALRIVRFTKILSLLRLL. Topologically, residues 339-369 are cytoplasmic; it reads RLSRLIRYIHQWEEIFHMTYDLASAVMRICN. A helical membrane pass occupies residues 370–390; that stretch reads LISMMLLLCHWDGCLQFLVPM. At 391–413 the chain is on the extracellular side; it reads LQDFPRNCWVSINGMVNHSWSEL. An N-linked (GlcNAc...) asparagine glycan is attached at Asn407. The segment at residues 414–435 is an intramembrane region (pore-forming); that stretch reads YSFALFKAMSHMLCIGYGRQAP. At 436–440 the chain is on the extracellular side; the sequence is ESMTD. The chain crosses the membrane as a helical span at residues 441-461; it reads IWLTMLSMIVGATCYAMFIGH. The Cytoplasmic segment spans residues 462–889; the sequence is ATALIQSLDS…SARSRLSSNL (428 aa). Residues Met599, Gly608, Glu609, Ile610, Cys611, Arg618, Thr619, and Arg659 each coordinate 3',5'-cyclic AMP. Phosphoserine; by PKG/PRKG2 is present on Ser668. A Phosphoserine modification is found at Ser754. The disordered stretch occupies residues 754 to 889; sequence SPRLVRRPPP…SARSRLSSNL (136 aa). At Arg756 the chain carries Omega-N-methylarginine. Residues 760 to 784 are compositionally biased toward pro residues; sequence RPPPGPAPAAASPGPPPPASPPGAP. Phosphoserine occurs at positions 771, 779, 786, 866, and 868. Residues 785-860 show a composition bias toward low complexity; sequence ASPRAPRTSP…TPAARAAAPS (76 aa).

It belongs to the potassium channel HCN family. As to quaternary structure, homotetramer. The channel is composed of a homo- or heterotetrameric complex of pore-forming subunits. Heterotetramer with HCN1. Forms an obligate 4:4 complex with accessory subunit PEX5L. Interacts with KCNE2. In terms of processing, phosphorylation at Ser-668 by PRKG2 shifts the voltage-dependence to more negative voltages, hence counteracting the stimulatory effect of cGMP on gating. Post-translationally, S-palmitoylated. N-glycosylated; required for cell surface trafficking of HCN2. As to expression, highly expressed throughout the brain. Detected at low levels in heart.

The protein localises to the cell membrane. The catalysed reaction is Na(+)(in) = Na(+)(out). The enzyme catalyses K(+)(in) = K(+)(out). It carries out the reaction NH4(+)(in) = NH4(+)(out). Its activity is regulated as follows. Activated by cAMP, and at 10-100 times higher concentrations, also by cGMP. cAMP binding causes a conformation change that leads to the assembly of an active tetramer and channel opening. Binding of cAMP removes a tonic inhibition conferred by cyclic nucleotide-binding domain (CNBD) on channel opening. Channel activity is modulated by intracellular chloride ions and pH; acidic pH shifts the activation to more negative voltages. Inhibited by extracellular cesium ions. Hyperpolarization-activated ion channel that is permeable to sodium and potassium ions. Displays lower selectivity for K(+) over Na(+) ions. Contributes to the native pacemaker currents in heart (If) and in neurons (Ih). Can also transport ammonium in the distal nephron. Involved in the initiation of neuropathic pain in sensory neurons. This chain is Potassium/sodium hyperpolarization-activated cyclic nucleotide-gated channel 2, found in Homo sapiens (Human).